The following is a 413-amino-acid chain: Serine hydroxymethyltransferase (413 aa).

(6S)-5,6,7,8-tetrahydrofolate-binding positions include Leu-117 and 121-123 (GHL). Lys-226 bears the N6-(pyridoxal phosphate)lysine mark. Residues Glu-239 and 349–351 (SPF) contribute to the (6S)-5,6,7,8-tetrahydrofolate site.

The protein belongs to the SHMT family. In terms of assembly, homodimer. Pyridoxal 5'-phosphate is required as a cofactor.

The protein localises to the cytoplasm. It catalyses the reaction (6R)-5,10-methylene-5,6,7,8-tetrahydrofolate + glycine + H2O = (6S)-5,6,7,8-tetrahydrofolate + L-serine. The protein operates within one-carbon metabolism; tetrahydrofolate interconversion. It functions in the pathway amino-acid biosynthesis; glycine biosynthesis; glycine from L-serine: step 1/1. In terms of biological role, catalyzes the reversible interconversion of serine and glycine with tetrahydrofolate (THF) serving as the one-carbon carrier. This reaction serves as the major source of one-carbon groups required for the biosynthesis of purines, thymidylate, methionine, and other important biomolecules. Also exhibits THF-independent aldolase activity toward beta-hydroxyamino acids, producing glycine and aldehydes, via a retro-aldol mechanism. This is Serine hydroxymethyltransferase from Bacillus cereus (strain AH187).